The chain runs to 147 residues: Hemoglobin subunit beta (147 aa).

The 146-residue stretch at 2 to 147 (HWEDAEKQYI…ISHSLGREYH (146 aa)) folds into the Globin domain. Positions 63 and 92 each coordinate heme b.

This sequence belongs to the globin family. Heterotetramer of two alpha chains and two beta chains. In terms of tissue distribution, red blood cells.

In terms of biological role, involved in oxygen transport from the lung to the various peripheral tissues. This is Hemoglobin subunit beta (HBB) from Lepidosiren paradoxus (South American lungfish).